A 145-amino-acid chain; its full sequence is Large ribosomal subunit protein uL13 (145 aa).

Residues 72–91 (DKMYHRHSNHPGGLKSISAG) are disordered.

The protein belongs to the universal ribosomal protein uL13 family. Part of the 50S ribosomal subunit.

Its function is as follows. This protein is one of the early assembly proteins of the 50S ribosomal subunit, although it is not seen to bind rRNA by itself. It is important during the early stages of 50S assembly. The sequence is that of Large ribosomal subunit protein uL13 from Staphylococcus epidermidis (strain ATCC 12228 / FDA PCI 1200).